A 229-amino-acid polypeptide reads, in one-letter code: MESPKTFMRKLPITPGYCGFIPWLSCQESSSEDRMNPCVKAFQERTQRYKEDQQGLNCSVANTPPLKPICSEDTVLWVLHEYAKKYHPLTLECKNEKKPLQEPPIPGWAGYLPRARVTEFGYATRYTIMAKKCYKDFLDLVEQAKRAQLKPYEQTYDVRAAQPLSPSSKILQLQGLSPAFPEFSGPGQTPPSEDPQAPRPCGCAQWSSQSCSRNVYGEPPSLAKAFAES.

The interval 181-201 (PEFSGPGQTPPSEDPQAPRPC) is disordered.

Microtubule inner protein component of sperm flagellar doublet microtubules. In terms of tissue distribution, expressed in testis (at protein level).

The protein resides in the cytoplasm. It localises to the cytoskeleton. Its subcellular location is the flagellum axoneme. It is found in the nucleus. Microtubule inner protein (MIP) part of the dynein-decorated doublet microtubules (DMTs) in flagellum axoneme. May serve to reinforce and thus stabilize the microtubule structure in the sperm flagella. The sequence is that of Sperm-associated microtubule inner protein 5 (Spmip5) from Mus musculus (Mouse).